The following is a 201-amino-acid chain: NADH-quinone oxidoreductase subunit C (201 aa).

Belongs to the complex I 30 kDa subunit family. NDH-1 is composed of 14 different subunits. Subunits NuoB, C, D, E, F, and G constitute the peripheral sector of the complex.

The protein localises to the cell inner membrane. It catalyses the reaction a quinone + NADH + 5 H(+)(in) = a quinol + NAD(+) + 4 H(+)(out). Its function is as follows. NDH-1 shuttles electrons from NADH, via FMN and iron-sulfur (Fe-S) centers, to quinones in the respiratory chain. The immediate electron acceptor for the enzyme in this species is believed to be ubiquinone. Couples the redox reaction to proton translocation (for every two electrons transferred, four hydrogen ions are translocated across the cytoplasmic membrane), and thus conserves the redox energy in a proton gradient. The polypeptide is NADH-quinone oxidoreductase subunit C (Ruegeria sp. (strain TM1040) (Silicibacter sp.)).